The sequence spans 139 residues: Histone H2AX (139 aa).

The tract at residues 1–24 (MSSTATTKGGRGKPKASKSVSRSS) is disordered. Ser136 is subject to Phosphoserine; by ATM and ATR. A [ST]-Q motif motif is present at residues 136-137 (SQ).

It belongs to the histone H2A family. The nucleosome is a histone octamer containing two molecules each of H2A, H2B, H3 and H4 assembled in one H3-H4 heterotetramer and two H2A-H2B heterodimers. The octamer wraps approximately 147 bp of DNA. Interacts with numerous proteins required for DNA damage signaling and repair when phosphorylated on Ser-136. Post-translationally, phosphorylated on Ser-136 (to form gamma-H2AX) in response to DNA double strand breaks (DSBs) generated by exogenous genotoxic agents and by stalled replication forks, and may also occur during meiotic recombination events. Phosphorylation can extend up to several thousand nucleosomes from the actual site of the DSB and may mark the surrounding chromatin for recruitment of proteins required for DNA damage signaling and repair. Widespread phosphorylation may also serve to amplify the damage signal or aid repair of persistent lesions. Phosphorylation of Ser-136 in response to ionizing radiation is mediated by ATM while defects in DNA replication induce Ser-136 phosphorylation subsequent to activation of ATR. Dephosphorylation of Ser-136 by PP2A is required for DNA DSB repair.

The protein localises to the nucleus. It localises to the chromosome. Functionally, variant histone H2A which replaces conventional H2A in a subset of nucleosomes. Nucleosomes wrap and compact DNA into chromatin, limiting DNA accessibility to the cellular machineries which require DNA as a template. Histones thereby play a central role in transcription regulation, DNA repair, DNA replication and chromosomal stability. DNA accessibility is regulated via a complex set of post-translational modifications of histones, also called histone code, and nucleosome remodeling. Required for checkpoint-mediated arrest of cell cycle progression in response to low doses of ionizing radiation and for efficient repair of DNA double strand breaks (DSBs) specifically when modified by C-terminal phosphorylation. In Cicer arietinum (Chickpea), this protein is Histone H2AX (HIS2A).